A 172-amino-acid polypeptide reads, in one-letter code: Adenine phosphoribosyltransferase (172 aa).

It belongs to the purine/pyrimidine phosphoribosyltransferase family. As to quaternary structure, homodimer.

The protein resides in the cytoplasm. It catalyses the reaction AMP + diphosphate = 5-phospho-alpha-D-ribose 1-diphosphate + adenine. Its pathway is purine metabolism; AMP biosynthesis via salvage pathway; AMP from adenine: step 1/1. In terms of biological role, catalyzes a salvage reaction resulting in the formation of AMP, that is energically less costly than de novo synthesis. In Staphylococcus haemolyticus (strain JCSC1435), this protein is Adenine phosphoribosyltransferase.